A 299-amino-acid chain; its full sequence is Acetylglutamate kinase (299 aa).

Substrate contacts are provided by residues 72–73 (GG), Arg-94, and Asn-196.

The protein belongs to the acetylglutamate kinase family. ArgB subfamily.

Its subcellular location is the cytoplasm. The enzyme catalyses N-acetyl-L-glutamate + ATP = N-acetyl-L-glutamyl 5-phosphate + ADP. The protein operates within amino-acid biosynthesis; L-arginine biosynthesis; N(2)-acetyl-L-ornithine from L-glutamate: step 2/4. Its function is as follows. Catalyzes the ATP-dependent phosphorylation of N-acetyl-L-glutamate. The chain is Acetylglutamate kinase from Burkholderia mallei (strain NCTC 10247).